The following is a 358-amino-acid chain: Protein IncC (358 aa).

Residues 1–101 (MGAIHEETAN…VGSRRQEETG (101 aa)) form a disordered region. Basic and acidic residues predominate over residues 88–99 (HRQEVGSRRQEE).

Belongs to the ParA family.

This is one of the proteins encoded by the trfB operon; it is involved in plasmid maintenance and replication. The chain is Protein IncC (incC) from Escherichia coli.